A 405-amino-acid polypeptide reads, in one-letter code: PP2A regulatory subunit TAP46 (405 aa).

2 disordered regions span residues 159 to 189 and 352 to 405; these read ERRGRSTKASALSTPVESGEDDIPDDDSEEE and ATTS…TPCG. Residues 165–174 show a composition bias toward polar residues; sequence TKASALSTPV. Acidic residues-rich tracts occupy residues 176–189 and 367–377; these read SGEDDIPDDDSEEE and EDEEDDDEDEE. The span at 378–393 shows a compositional bias: basic and acidic residues; sequence AVMKARAFDDWKDDNP.

The protein belongs to the IGBP1/TAP42 family. As to quaternary structure, interacts with the 36 kDa catalytic subunit (subunit C) of PP2A. Interacts with PP2A1 and PP2A2. Interacts with PP2A3, PPX1 and FYPP1. Interacts with FYPP3 and ABI5. Interacts with ATPK1/S6K1 and ATPK2/S6K2. Interacts with TIP41L. Phosphorylated by TOR kinase in vitro. As to expression, ubiquitous. Highly expressed in seed, and particularly in the embryo.

Functionally, involved in the positive regulation of the TOR signaling pathway. Acts as a negative regulator of PP2A catalytic activity. Plays a positive role in the ABA-regulated inhibition of germination, probably throught its interaction with ABI5. The sequence is that of PP2A regulatory subunit TAP46 from Arabidopsis thaliana (Mouse-ear cress).